Reading from the N-terminus, the 180-residue chain is MSKLNLEKKLKIVKEAKKLNIKKSTYLANKYDISVDTVESLVNRFEAFRIEGLINKEKKPYYSAKLKLKIVLYKLETNHSYDEVAKKFNIIYSSTIAGWVKKYREYGFLGLNNNIGRPKKIMKNPNKKPAKIKKSQVKINNDQQIKELKEQVEYYKLEAEFWKKFHTLLTKEKSTRKKQK.

The protein belongs to the IS150/IS1296 orfA family.

This is Insertion element IS1296 uncharacterized 21.4 kDa protein from Mycoplasma mycoides subsp. mycoides SC.